Here is a 192-residue protein sequence, read N- to C-terminus: L-2,4-diaminobutyric acid acetyltransferase (192 aa).

The 162-residue stretch at leucine 31–isoleucine 192 folds into the N-acetyltransferase domain.

Belongs to the acetyltransferase family. EctA subfamily.

The catalysed reaction is L-2,4-diaminobutanoate + acetyl-CoA = (2S)-4-acetamido-2-aminobutanoate + CoA + H(+). It functions in the pathway amine and polyamine biosynthesis; ectoine biosynthesis; L-ectoine from L-aspartate 4-semialdehyde: step 2/3. Its function is as follows. Catalyzes the acetylation of L-2,4-diaminobutyrate (DABA) to gamma-N-acetyl-alpha,gamma-diaminobutyric acid (ADABA) with acetyl coenzyme A. Does not acetylate amino acids like GABA, L-ornithine, L-lysine and L-aspartate. The protein is L-2,4-diaminobutyric acid acetyltransferase (ectA) of Halomonas elongata (strain ATCC 33173 / DSM 2581 / NBRC 15536 / NCIMB 2198 / 1H9).